Reading from the N-terminus, the 385-residue chain is Galactokinase (385 aa).

34 to 37 lines the substrate pocket; it reads EHTD. 124–130 provides a ligand contact to ATP; sequence SSGLSSS. The Mg(2+) site is built by S130 and E162. The Proton acceptor role is filled by D174. Substrate is bound at residue Y223.

This sequence belongs to the GHMP kinase family. GalK subfamily.

It is found in the cytoplasm. The enzyme catalyses alpha-D-galactose + ATP = alpha-D-galactose 1-phosphate + ADP + H(+). It functions in the pathway carbohydrate metabolism; galactose metabolism. In terms of biological role, catalyzes the transfer of the gamma-phosphate of ATP to D-galactose to form alpha-D-galactose-1-phosphate (Gal-1-P). This Mannheimia succiniciproducens (strain KCTC 0769BP / MBEL55E) protein is Galactokinase.